The primary structure comprises 151 residues: MNYIKQFILAICFYLVLTCQDHVLARDTTTRDIVVPKISEWQVTVANGLTTGETLFIHCKSKENDLGDINLKFLDRFSWNFGENMLHSTLFWCYMSKDDGHMNVKVFWDDVILFHRCDWKNCVWTAKNDGLYLWNSAIGEDVLSEKWKSGW.

Positions 1–25 (MNYIKQFILAICFYLVLTCQDHVLA) are cleaved as a signal peptide.

It belongs to the plant self-incompatibility (S1) protein family.

Its subcellular location is the secreted. The chain is S-protein homolog 74 from Arabidopsis thaliana (Mouse-ear cress).